Consider the following 143-residue polypeptide: Transcriptional regulator MraZ (143 aa).

2 consecutive SpoVT-AbrB domains span residues 5-47 and 76-119; these read SHAP…PMAE and AADD…DAQR.

Belongs to the MraZ family. As to quaternary structure, forms oligomers.

The protein resides in the cytoplasm. It localises to the nucleoid. This chain is Transcriptional regulator MraZ, found in Frankia casuarinae (strain DSM 45818 / CECT 9043 / HFP020203 / CcI3).